We begin with the raw amino-acid sequence, 122 residues long: Small ribosomal subunit protein uS13 (122 aa).

The tract at residues arginine 94–lysine 122 is disordered.

This sequence belongs to the universal ribosomal protein uS13 family. In terms of assembly, part of the 30S ribosomal subunit. Forms a loose heterodimer with protein S19. Forms two bridges to the 50S subunit in the 70S ribosome.

Located at the top of the head of the 30S subunit, it contacts several helices of the 16S rRNA. In the 70S ribosome it contacts the 23S rRNA (bridge B1a) and protein L5 of the 50S subunit (bridge B1b), connecting the 2 subunits; these bridges are implicated in subunit movement. Contacts the tRNAs in the A and P-sites. This chain is Small ribosomal subunit protein uS13, found in Rubrobacter xylanophilus (strain DSM 9941 / JCM 11954 / NBRC 16129 / PRD-1).